The primary structure comprises 91 residues: MVKHKVTVMFGPYVSCGILQYKTARLEGLQELLLSDGHSVEFEKTEDRDDVELVVHGEIVFRCKIQDLQYGGDGKLDPTCHRALEAVQKAY.

Belongs to the UPF0728 family.

The chain is UPF0728 protein v1g117062 from Nematostella vectensis (Starlet sea anemone).